The chain runs to 617 residues: MIYDGIIVGAGHAGVEAALAMAKMKLNTLLITGDLTKVATLPCNPSIGGPAKGIVVREIDALGGQMAKSADLSQIQMKMLNPSKGPAVRALRAQIDKLKYPKVMLDVLQNTPNLTLLQGFVDTLIVEDNTVKGVNLEDGSQVFAQTVIITTGTYLGSQILIGHEKTSSGPNGERTTRGISNQLKNLGFEMLRLKTGTPPRIARDSIDYSKTVPQPGDGVFQTFSHDSPITDLGHQEFSYLIHTSPDTKDIIFNNLDASAMYGGVVEGVGPRYCPSIEDKFVRFKDKDRHQIFIEPESMDLNEMYIQGLSTSMPKHIQEQMVRSLPGMENARIVRYAYAIEYDAINPRQLYQSLETKVIHNLFCAGQINGTSGYEEAAGQGLMAGINAGLKVQGKKPLVLKRDEAYIGVLIDDLITKGTSEPYRLLTSRAEHRLLLRNDNADIRLRDYGYQIGLVDDATYERFEHKKIALKEMIERAKSTKINPTEENLNYLASVNSSPIYEGVTVFKLLERPELKIETLKHFLPSDYNHEIYEQLEIYIKYDGYIEKARREADKLLRYESRFIPNDINYHSIHNISAEAKEKLSKIKPETLGQATRILGVGPTDVSMLLVYLEAKNA.

FAD-binding positions include 9–14 (GAGHAG), V121, and T176. 269-283 (GPRYCPSIEDKFVRF) serves as a coordination point for NAD(+). FAD is bound at residue Q366.

Belongs to the MnmG family. As to quaternary structure, homodimer. Heterotetramer of two MnmE and two MnmG subunits. It depends on FAD as a cofactor.

The protein resides in the cytoplasm. In terms of biological role, NAD-binding protein involved in the addition of a carboxymethylaminomethyl (cmnm) group at the wobble position (U34) of certain tRNAs, forming tRNA-cmnm(5)s(2)U34. In Acholeplasma laidlawii (strain PG-8A), this protein is tRNA uridine 5-carboxymethylaminomethyl modification enzyme MnmG.